The sequence spans 431 residues: MLVLKTTDKEFSPRFQSLVSDRREATVDVSGTVRDILAHVKARGDAAVQEYTSRFDHYRPHSHHLSAAFIAEQAAKCSDEVKAALELAAERISSFHQKQLPQDIGYTDTAGVKLGLNWVALSQVGIYVPGGRASYPSSVLMNALPAKIAGVERIVMTVPMPHGEINPAVLAAAQVAGVTEIYSIGGAQAVGALAYGTETITPVDKIVGPGNAYVAEAKRQVFGTVGIDSIAGPSEILVVADRQNNPEWIAWDLLSQAEHDPSAQSILITDSESFAQQVIAAVEQILTTLPSQKVASSSWQNHGAVIIVRDLAESIPLLNQLAPEHVELCVDNPQLLASQIKCAGSLFLGRYTPEAIGDYLGGPNHVLPTSRSARFASGLSVYDFLKRITYLECNQAALQKIGQSAVTLAETEGLPAHAGSVAVRLQGLKDM.

Y127, Q188, and N211 together coordinate NAD(+). 3 residues coordinate substrate: S234, Q256, and H259. The Zn(2+) site is built by Q256 and H259. Catalysis depends on proton acceptor residues E324 and H325. Substrate contacts are provided by H325, D358, E412, and H417. Residue D358 participates in Zn(2+) binding. H417 lines the Zn(2+) pocket.

It belongs to the histidinol dehydrogenase family. Zn(2+) is required as a cofactor.

It carries out the reaction L-histidinol + 2 NAD(+) + H2O = L-histidine + 2 NADH + 3 H(+). The protein operates within amino-acid biosynthesis; L-histidine biosynthesis; L-histidine from 5-phospho-alpha-D-ribose 1-diphosphate: step 9/9. In terms of biological role, catalyzes the sequential NAD-dependent oxidations of L-histidinol to L-histidinaldehyde and then to L-histidine. The chain is Histidinol dehydrogenase 1 (hisD1) from Nostoc sp. (strain PCC 7120 / SAG 25.82 / UTEX 2576).